The chain runs to 318 residues: Galactofuranose-binding protein YtfQ (318 aa).

The first 21 residues, methionine 1–alanine 21, serve as a signal peptide directing secretion. Beta-D-galactofuranose-binding positions include glutamate 34 to arginine 38, aspartate 111 to arginine 112, arginine 167, asparagine 220, and aspartate 248. Cysteine 150 and cysteine 214 are disulfide-bonded.

It belongs to the bacterial solute-binding protein 2 family. The complex is composed of two ATP-binding proteins (YtfR), two transmembrane proteins (YtfT and YjfF) and a solute-binding protein (YtfQ).

It localises to the periplasm. Functionally, part of the ABC transporter complex YtfQRT-YjfF involved in galactofuranose transport. Binds to both alpha- and beta-galactofuranose. This Escherichia coli (strain K12) protein is Galactofuranose-binding protein YtfQ (ytfQ).